The sequence spans 123 residues: Large ribosomal subunit protein bL12 (123 aa).

This sequence belongs to the bacterial ribosomal protein bL12 family. Homodimer. Part of the ribosomal stalk of the 50S ribosomal subunit. Forms a multimeric L10(L12)X complex, where L10 forms an elongated spine to which 2 to 4 L12 dimers bind in a sequential fashion. Binds GTP-bound translation factors.

Forms part of the ribosomal stalk which helps the ribosome interact with GTP-bound translation factors. Is thus essential for accurate translation. This chain is Large ribosomal subunit protein bL12, found in Marinomonas sp. (strain MWYL1).